The sequence spans 307 residues: Elongation factor Ts (307 aa).

Residues 80–83 are involved in Mg(2+) ion dislocation from EF-Tu; the sequence is TDFV.

Belongs to the EF-Ts family.

The protein localises to the cytoplasm. Associates with the EF-Tu.GDP complex and induces the exchange of GDP to GTP. It remains bound to the aminoacyl-tRNA.EF-Tu.GTP complex up to the GTP hydrolysis stage on the ribosome. This is Elongation factor Ts from Bradyrhizobium diazoefficiens (strain JCM 10833 / BCRC 13528 / IAM 13628 / NBRC 14792 / USDA 110).